A 364-amino-acid chain; its full sequence is Protein MGF 360-18R (364 aa).

This sequence belongs to the asfivirus MGF 360 family.

Plays a role in virus cell tropism, and may be required for efficient virus replication in macrophages. In African swine fever virus (isolate Tick/South Africa/Pretoriuskop Pr4/1996) (ASFV), this protein is Protein MGF 360-18R.